A 1151-amino-acid chain; its full sequence is SCF E3 ubiquitin ligase complex F-box protein GRR1 (1151 aa).

The span at 1–18 (MDQDNNNHNDSNRLHPPD) shows a compositional bias: basic and acidic residues. Positions 1-72 (MDQDNNNHND…ATSERNASEV (72 aa)) are disordered. The segment covering 38–49 (NNNNNNNNNNNN) has biased composition (low complexity). The span at 58–72 (RTRETATSERNASEV) shows a compositional bias: basic and acidic residues. 2 positions are modified to phosphoserine: Ser199 and Ser300. An F-box domain is found at 314–361 (VFALNMLPSEILHLILDKLNQKYDIVKFLTVSKLWAEIIVKILYYRPH). LRR repeat units follow at residues 399–423 (GDYM…TLVF), 424–449 (CKHI…DITG), 450–475 (IRDV…YVPQ), 476–501 (ARNV…KITA), 502–527 (NNNM…DITL), 528–553 (SPNV…RITH), 554–582 (NTNI…DLSG), 583–608 (CENI…FLGK), 609–634 (CSRI…HFGH), 635–660 (CFNI…DFAC), 661–685 (CTNL…GLVK), 686–714 (CTQM…HLSY), and 715–740 (CSNL…SLTA). Residues 1066–1080 (AGANDTSNNETNNGN) are compositionally biased toward low complexity. Disordered regions lie at residues 1066 to 1090 (AGAN…NPNF) and 1118 to 1151 (VRNN…EDML).

As to quaternary structure, interacts with SKP1. Component of the probable SCF(GRR1) complex containing CDC53, SKP1, RBX1 and GRR1.

Its subcellular location is the membrane. Its pathway is protein modification; protein ubiquitination. In terms of biological role, substrate recognition component of a SCF (SKP1-CUL1-F-box protein) E3 ubiquitin-protein ligase complex which mediates the ubiquitination and subsequent proteasomal degradation of target proteins. Recognizes and directs ubiquitination of phosphorylated CLN1, CLN2 and GIC2. Probably constitutes the primary response element required for the generation or interpretation of the signal that induces glucose repression. This Saccharomyces cerevisiae (strain ATCC 204508 / S288c) (Baker's yeast) protein is SCF E3 ubiquitin ligase complex F-box protein GRR1 (GRR1).